Here is a 338-residue protein sequence, read N- to C-terminus: Serine/threonine-protein kinase YabT (338 aa).

Residues 28–286 (YTLRKQLGKG…PIKASPQPAT (259 aa)) form the Protein kinase domain. Residues 34 to 42 (LGKGANGIV) and lysine 55 each bind ATP. Catalysis depends on aspartate 148, which acts as the Proton acceptor. The disordered stretch occupies residues 266 to 312 (DAGQKAAQRKQPIKASPQPATRQRQQKPRQGKITKTRYTPKQKPAKS). The span at 289–309 (RQQKPRQGKITKTRYTPKQKP) shows a compositional bias: basic residues.

The protein belongs to the protein kinase superfamily. Ser/Thr protein kinase family. Post-translationally, autophosphorylated.

It carries out the reaction L-seryl-[protein] + ATP = O-phospho-L-seryl-[protein] + ADP + H(+). It catalyses the reaction L-threonyl-[protein] + ATP = O-phospho-L-threonyl-[protein] + ADP + H(+). Its function is as follows. Plays a role in the cell's commitment to sporulation; phosphorylates DNA replication initiation-control protein YabA. Deletion of this kinase delays entry into sporulation but does not affect final spore yield. Overexpression decreases biofilm formation; phosphorylation of YabA probably prevents biofilm formation. In Bacillus subtilis (strain 168), this protein is Serine/threonine-protein kinase YabT (yabT).